A 161-amino-acid polypeptide reads, in one-letter code: Kininogen-2 (161 aa).

Residues 1–23 (MRLWFCLSFFVVLCLEHFPGTLA) form the signal peptide. An intrachain disulfide couples C150 to C156. V160 bears the Valine amide mark.

It belongs to the bradykinin-related peptide family. As to expression, expressed by the skin glands.

The protein resides in the secreted. Inhibits ACE with a Ki of 1.6 uM, and targets B2 bradykinin receptor (BDKRB2). Provokes contraction of smooth muscle preparation (ileum). In vivo, induces an early hyperalgesic effects in living rats after intraplantar injection. Its function is as follows. Inhibits the bradykinin-induced in vitro relaxation of rat arterial smooth muscle and constriction of intestinal smooth muscle. May target bradykinin receptors (BDKRB). The sequence is that of Kininogen-2 from Bombina orientalis (Oriental fire-bellied toad).